We begin with the raw amino-acid sequence, 559 residues long: Glutamine--tRNA ligase (559 aa).

Residues 36 to 46 (PEPNGYLHLGH) carry the 'HIGH' region motif. Residues 37–39 (EPN) and 43–49 (HLGHAKS) each bind ATP. Asp-69 and Tyr-214 together coordinate L-glutamine. ATP contacts are provided by residues Thr-233, 263 to 264 (RL), and 271 to 273 (LSK). Positions 270–274 (LLSKR) match the 'KMSKS' region motif.

The protein belongs to the class-I aminoacyl-tRNA synthetase family. As to quaternary structure, monomer.

It is found in the cytoplasm. The enzyme catalyses tRNA(Gln) + L-glutamine + ATP = L-glutaminyl-tRNA(Gln) + AMP + diphosphate. The polypeptide is Glutamine--tRNA ligase (Nitrobacter winogradskyi (strain ATCC 25391 / DSM 10237 / CIP 104748 / NCIMB 11846 / Nb-255)).